We begin with the raw amino-acid sequence, 406 residues long: MERLQKQPLTSPGSVSSSRDSSVPGSPSSIVAKMDNQVLGYKDLAAIPKDKAILDIERPDLMIYEPHFTYSLLEHVELPRSRERSLSPKSTSPPPSPEVWAESRSPGTISQASAPRTAGTPRTSLPHFHHPETTRPDSNIYKKPPIYKQRAESTGGSPQSKHPIEDLIIESSKFPAAQPPDPNQPAKIETDYWPCPPSLAVVETEWRKRKASRRGAEEEEEEEDDDSGEEMKALRERQREELSKVTSNLGKMILKEEMEKSLPIRRKTRSLPDRTPFHTSLHAGTSKSSSLPAYGRTTLSRLQSTDFSPSGSEAESPGLQNGEGQRGRMDRGNSLPCVLEQKIYPYEMLVVTNRGRTKLPPGVDRMRLERHLSAEDFSRVFSMSPEEFGKLALWKRNELKKKASLF.

Disordered regions lie at residues 1–30 and 78–333; these read MERL…PSSI and LPRS…DRGN. Low complexity predominate over residues 11–29; sequence SPGSVSSSRDSSVPGSPSS. 10 positions are modified to phosphoserine: S16, S18, S26, S92, S96, S105, S110, S113, S157, and S227. Over residues 105 to 114 the composition is skewed to polar residues; sequence SPGTISQASA. Positions 217–228 are enriched in acidic residues; the sequence is EEEEEEEDDDSG. Residues 225–309 form an interaction with RASGRF2 region; sequence DDSGEEMKAL…SRLQSTDFSP (85 aa). Composition is skewed to basic and acidic residues over residues 229-243 and 253-262; these read EEMK…EELS and ILKEEMEKSL. Residues S270, S280, S290, S304, S316, S334, S373, and S384 each carry the phosphoserine modification. Polar residues predominate over residues 282 to 323; the sequence is HAGTSKSSSLPAYGRTTLSRLQSTDFSPSGSEAESPGLQNGE. The HP domain occupies 338 to 406; the sequence is VLEQKIYPYE…NELKKKASLF (69 aa). Phosphoserine; by PKA is present on S404.

Belongs to the villin/gelsolin family. Monomeric; under reducing conditions. Self-associates. Exists under oxidizing condition as a trimer linked by disulfide bonds. Found in a complex with DMTN, F-actin and spectrin. Found in a complex with ADD2, DMTN and SLC2A1. Interacts with F-actin, ITPKB and spectrin. Interacts with SLC2A1 (via C-terminus cytoplasmic region). Interacts with RASGRF2. Phosphorylated. Phosphorylation at Ser-404 by PKA causes the C-terminal headpiece domain to associate with the N-terminal core domain, and leads to the inhibition of its actin bundling activity.

The protein localises to the cytoplasm. It is found in the cytosol. Its subcellular location is the perinuclear region. The protein resides in the cytoskeleton. It localises to the cell membrane. The protein localises to the membrane. It is found in the endomembrane system. Its subcellular location is the cell projection. In terms of biological role, membrane-cytoskeleton-associated protein with F-actin-binding activity that induces F-actin bundles formation and stabilization. Its F-actin-bundling activity is reversibly regulated upon its phosphorylation by the cAMP-dependent protein kinase A (PKA). Binds to the erythrocyte membrane glucose transporter-1 SLC2A1/GLUT1, and hence stabilizes and attaches the spectrin-actin network to the erythrocytic plasma membrane. Plays a role in maintaining the functional integrity of PKA-activated erythrocyte shape and the membrane mechanical properties. Also plays a role as a modulator of actin dynamics in fibroblasts; acts as a negative regulator of the RhoA activation pathway. In platelets, functions as a regulator of internal calcium mobilization across the dense tubular system that affects platelet granule secretion pathways and aggregation. Also required for the formation of a diverse set of cell protrusions, such as filopodia and lamellipodia, necessary for platelet cell spreading, motility and migration. Acts as a tumor suppressor and inhibits malignant cell transformation. This Bos taurus (Bovine) protein is Dematin (DMTN).